The following is a 368-amino-acid chain: Phosphate acyltransferase (368 aa).

The interval 334–368 (EGSLEQAARDASGAGHASPIAGQPAEPYAAQSSKA) is disordered.

Belongs to the PlsX family. In terms of assembly, homodimer. Probably interacts with PlsY.

Its subcellular location is the cytoplasm. The enzyme catalyses a fatty acyl-[ACP] + phosphate = an acyl phosphate + holo-[ACP]. It functions in the pathway lipid metabolism; phospholipid metabolism. Catalyzes the reversible formation of acyl-phosphate (acyl-PO(4)) from acyl-[acyl-carrier-protein] (acyl-ACP). This enzyme utilizes acyl-ACP as fatty acyl donor, but not acyl-CoA. This chain is Phosphate acyltransferase, found in Paraburkholderia xenovorans (strain LB400).